The sequence spans 618 residues: Carotenoid cleavage dioxygenase 7, chloroplastic (618 aa).

The transit peptide at 1 to 31 directs the protein to the chloroplast; the sequence is MSLPIPPKFLPPLKSPPIHHHQTPPPLAPPR. The disordered stretch occupies residues 11-34; the sequence is PPLKSPPIHHHQTPPPLAPPRAAI. The Fe cation site is built by His266, His319, His398, and His612.

The protein belongs to the carotenoid oxygenase family. The cofactor is Fe(2+). As to expression, expressed in flowers, siliques, inflorescence stems, petiole, leaves and roots.

The protein resides in the plastid. Its subcellular location is the chloroplast. It catalyses the reaction 9-cis-beta-carotene + O2 = 9-cis-10'-apo-beta-carotenal + beta-ionone. In terms of biological role, involved in strigolactones biosynthesis by cleaving asymmetrically a variety of linear and cyclic carotenoids at the 9-10 double bond. Produces one C(13) beta-ionone and the C(27) 10'-apo-beta-carotenal. Strigolactones are hormones that inhibit tillering and shoot branching through the MAX-dependent pathway, contribute to the regulation of shoot architectural response to phosphate-limiting conditions and function as rhizosphere signal that stimulates hyphal branching of arbuscular mycorrhizal fungi and trigger seed germination of root parasitic weeds. No activity on lycopene, lutein, zeaxanthin, violaxanthin or neoxanthin. Probably not involved in abscisic acid biosynthesis. The sequence is that of Carotenoid cleavage dioxygenase 7, chloroplastic (CCD7) from Arabidopsis thaliana (Mouse-ear cress).